Consider the following 255-residue polypeptide: uncharacterized protein (255 aa).

The N-terminal stretch at 1 to 23 is a signal peptide; that stretch reads MKRLNKLVLGISFLFLVISITAG. The N-palmitoyl cysteine moiety is linked to residue cysteine 24. A lipid anchor (S-diacylglycerol cysteine) is attached at cysteine 24.

This sequence belongs to the staphylococcal tandem lipoprotein family.

Its subcellular location is the cell membrane. This is an uncharacterized protein from Staphylococcus aureus (strain N315).